We begin with the raw amino-acid sequence, 125 residues long: Small ribosomal subunit protein bS6 (125 aa).

A disordered region spans residues 100–125 (SPMVKAREERKPLTEVENNDFEDAEE). The segment covering 104–113 (KAREERKPLT) has biased composition (basic and acidic residues). Residues 116–125 (ENNDFEDAEE) are compositionally biased toward acidic residues.

Belongs to the bacterial ribosomal protein bS6 family.

Its function is as follows. Binds together with bS18 to 16S ribosomal RNA. The chain is Small ribosomal subunit protein bS6 from Histophilus somni (strain 129Pt) (Haemophilus somnus).